We begin with the raw amino-acid sequence, 129 residues long: Small ribosomal subunit protein uS11 (129 aa).

Positions 108 to 129 (EDVTPIPHDGTKPKGGKRGRRV) are disordered.

The protein belongs to the universal ribosomal protein uS11 family. Part of the 30S ribosomal subunit.

Its function is as follows. Located on the platform of the 30S subunit. In Methanothrix thermoacetophila (strain DSM 6194 / JCM 14653 / NBRC 101360 / PT) (Methanosaeta thermophila), this protein is Small ribosomal subunit protein uS11.